The following is a 159-amino-acid chain: MVGGLTHVDEKGVKMVEIGYKDVVFRKAVAKGRIKLKPETVKLIKEGKIEKGNVLATAQIAGILAVKRTPELIPLCHPIPITGVDITFDFGEDYIEVTCEVRAYYKTGVEMEALTGVTVALLAIWDMVKAVEKDEKGQYPYTRIENVHVVEKVKTHNSQ.

Residues 75 to 77 and 111 to 112 each bind substrate; these read LCH and ME. Residue aspartate 126 is part of the active site.

Belongs to the MoaC family. In terms of assembly, homohexamer; trimer of dimers.

It carries out the reaction (8S)-3',8-cyclo-7,8-dihydroguanosine 5'-triphosphate = cyclic pyranopterin phosphate + diphosphate. Its pathway is cofactor biosynthesis; molybdopterin biosynthesis. Its function is as follows. Catalyzes the conversion of (8S)-3',8-cyclo-7,8-dihydroguanosine 5'-triphosphate to cyclic pyranopterin monophosphate (cPMP). The polypeptide is Probable cyclic pyranopterin monophosphate synthase (Pyrococcus horikoshii (strain ATCC 700860 / DSM 12428 / JCM 9974 / NBRC 100139 / OT-3)).